The following is a 156-amino-acid chain: 6,7-dimethyl-8-ribityllumazine synthase (156 aa).

5-amino-6-(D-ribitylamino)uracil contacts are provided by residues F25, 59 to 61 (AWE), and 83 to 85 (AVI). 88–89 (ST) serves as a coordination point for (2S)-2-hydroxy-3-oxobutyl phosphate. Residue H91 is the Proton donor of the active site. N116 provides a ligand contact to 5-amino-6-(D-ribitylamino)uracil. R130 contacts (2S)-2-hydroxy-3-oxobutyl phosphate.

It belongs to the DMRL synthase family. In terms of assembly, forms an icosahedral capsid composed of 60 subunits, arranged as a dodecamer of pentamers.

It carries out the reaction (2S)-2-hydroxy-3-oxobutyl phosphate + 5-amino-6-(D-ribitylamino)uracil = 6,7-dimethyl-8-(1-D-ribityl)lumazine + phosphate + 2 H2O + H(+). Its pathway is cofactor biosynthesis; riboflavin biosynthesis; riboflavin from 2-hydroxy-3-oxobutyl phosphate and 5-amino-6-(D-ribitylamino)uracil: step 1/2. Catalyzes the formation of 6,7-dimethyl-8-ribityllumazine by condensation of 5-amino-6-(D-ribitylamino)uracil with 3,4-dihydroxy-2-butanone 4-phosphate. This is the penultimate step in the biosynthesis of riboflavin. The sequence is that of 6,7-dimethyl-8-ribityllumazine synthase from Acinetobacter baumannii (strain AB0057).